A 102-amino-acid polypeptide reads, in one-letter code: Small ribosomal subunit protein uS10 (102 aa).

This sequence belongs to the universal ribosomal protein uS10 family. In terms of assembly, part of the 30S ribosomal subunit.

In terms of biological role, involved in the binding of tRNA to the ribosomes. In Leptospira borgpetersenii serovar Hardjo-bovis (strain JB197), this protein is Small ribosomal subunit protein uS10.